Reading from the N-terminus, the 149-residue chain is Transcriptional repressor NrdR (149 aa).

Residues cysteine 3 to cysteine 34 fold into a zinc finger. The ATP-cone domain occupies proline 49 to glutamate 139.

It belongs to the NrdR family. It depends on Zn(2+) as a cofactor.

In terms of biological role, negatively regulates transcription of bacterial ribonucleotide reductase nrd genes and operons by binding to NrdR-boxes. This chain is Transcriptional repressor NrdR, found in Paracidovorax citrulli (strain AAC00-1) (Acidovorax citrulli).